The following is a 354-amino-acid chain: MSIQTDDFAPVPPPKRVVSAAPTSPQEEALERALRPKLLQEYVGQAKAREQLEIFIGAARKREEALDHVLLFGPPGLGKTTLSHIIAAELGVNLRQTSGPVLEKPKDLAALLTNLEKNDVLFIDEIHRLSPVVEEILYPALEDYQIDIMIGEGPAARSIKLDLQPFTLVGATTRAGMLTNPLRDRFGIVARLEFYTPEELSRIVTRSAGLLNAPIDAQGAFEIARRSRGTPRIANRLLRRVRDYADVKGDGRITQDIAQRALAMLDVDPQGFDVMDRKLLEAVVHRFDGGPVGLDNIAASIGEEPGTIEDVIEPYLIQQGYLQRTPRGRIATLAAFRHLGVAPSRQHTDLFGPA.

A disordered region spans residues 1–24 (MSIQTDDFAPVPPPKRVVSAAPTS). Residues 5-195 (TDDFAPVPPP…FGIVARLEFY (191 aa)) form a large ATPase domain (RuvB-L) region. ATP contacts are provided by residues L34, R35, G76, K79, T80, T81, 142-144 (EDY), R185, Y195, and R232. T80 contributes to the Mg(2+) binding site. Residues 196–266 (TPEELSRIVT…IAQRALAMLD (71 aa)) are small ATPAse domain (RuvB-S). Residues 269–354 (PQGFDVMDRK…RQHTDLFGPA (86 aa)) form a head domain (RuvB-H) region. DNA-binding residues include R324 and R329.

The protein belongs to the RuvB family. As to quaternary structure, homohexamer. Forms an RuvA(8)-RuvB(12)-Holliday junction (HJ) complex. HJ DNA is sandwiched between 2 RuvA tetramers; dsDNA enters through RuvA and exits via RuvB. An RuvB hexamer assembles on each DNA strand where it exits the tetramer. Each RuvB hexamer is contacted by two RuvA subunits (via domain III) on 2 adjacent RuvB subunits; this complex drives branch migration. In the full resolvosome a probable DNA-RuvA(4)-RuvB(12)-RuvC(2) complex forms which resolves the HJ.

The protein localises to the cytoplasm. The catalysed reaction is ATP + H2O = ADP + phosphate + H(+). Its function is as follows. The RuvA-RuvB-RuvC complex processes Holliday junction (HJ) DNA during genetic recombination and DNA repair, while the RuvA-RuvB complex plays an important role in the rescue of blocked DNA replication forks via replication fork reversal (RFR). RuvA specifically binds to HJ cruciform DNA, conferring on it an open structure. The RuvB hexamer acts as an ATP-dependent pump, pulling dsDNA into and through the RuvAB complex. RuvB forms 2 homohexamers on either side of HJ DNA bound by 1 or 2 RuvA tetramers; 4 subunits per hexamer contact DNA at a time. Coordinated motions by a converter formed by DNA-disengaged RuvB subunits stimulates ATP hydrolysis and nucleotide exchange. Immobilization of the converter enables RuvB to convert the ATP-contained energy into a lever motion, pulling 2 nucleotides of DNA out of the RuvA tetramer per ATP hydrolyzed, thus driving DNA branch migration. The RuvB motors rotate together with the DNA substrate, which together with the progressing nucleotide cycle form the mechanistic basis for DNA recombination by continuous HJ branch migration. Branch migration allows RuvC to scan DNA until it finds its consensus sequence, where it cleaves and resolves cruciform DNA. In Paracidovorax citrulli (strain AAC00-1) (Acidovorax citrulli), this protein is Holliday junction branch migration complex subunit RuvB.